Consider the following 597-residue polypeptide: Aspartate--tRNA(Asp/Asn) ligase (597 aa).

Glu-175 is a binding site for L-aspartate. The segment at 199–202 (QQYK) is aspartate. The L-aspartate site is built by Arg-221 and His-454. Residue 221–223 (RDE) participates in ATP binding. Residue Glu-488 participates in ATP binding. L-aspartate is bound at residue Arg-495. 540–543 (GVDR) is a binding site for ATP.

The protein belongs to the class-II aminoacyl-tRNA synthetase family. Type 1 subfamily. As to quaternary structure, homodimer.

Its subcellular location is the cytoplasm. The catalysed reaction is tRNA(Asx) + L-aspartate + ATP = L-aspartyl-tRNA(Asx) + AMP + diphosphate. In terms of biological role, aspartyl-tRNA synthetase with relaxed tRNA specificity since it is able to aspartylate not only its cognate tRNA(Asp) but also tRNA(Asn). Reaction proceeds in two steps: L-aspartate is first activated by ATP to form Asp-AMP and then transferred to the acceptor end of tRNA(Asp/Asn). In Bartonella quintana (strain Toulouse) (Rochalimaea quintana), this protein is Aspartate--tRNA(Asp/Asn) ligase.